The sequence spans 473 residues: Ribulose bisphosphate carboxylase large chain (473 aa).

The substrate site is built by N116 and T166. Residue K168 is the Proton acceptor of the active site. Position 170 (K170) interacts with substrate. The Mg(2+) site is built by K194, D196, and E197. K194 carries the N6-carboxylysine modification. Residue H287 is the Proton acceptor of the active site. Substrate-binding residues include R288, H320, and S372.

Belongs to the RuBisCO large chain family. Type I subfamily. As to quaternary structure, heterohexadecamer of 8 large chains and 8 small chains. Requires Mg(2+) as cofactor.

The enzyme catalyses 2 (2R)-3-phosphoglycerate + 2 H(+) = D-ribulose 1,5-bisphosphate + CO2 + H2O. It catalyses the reaction D-ribulose 1,5-bisphosphate + O2 = 2-phosphoglycolate + (2R)-3-phosphoglycerate + 2 H(+). Its function is as follows. RuBisCO catalyzes two reactions: the carboxylation of D-ribulose 1,5-bisphosphate, the primary event in carbon dioxide fixation, as well as the oxidative fragmentation of the pentose substrate. Both reactions occur simultaneously and in competition at the same active site. This Nitrosomonas sp. (strain ENI-11) protein is Ribulose bisphosphate carboxylase large chain.